Consider the following 214-residue polypeptide: ER lumen protein-retaining receptor 3 (214 aa).

At 1 to 4 (MNVF) the chain is on the lumenal side. The helical transmembrane segment at 5–24 (RILGDLSHLLAMILLLVKIW) threads the bilayer. Over 25–32 (RSKSCAGI) the chain is Cytoplasmic. Residues 33–52 (SGKSQILFALVFTTRYLDLF) traverse the membrane as a helical segment. The interval 47-48 (RY) is interaction with the K-D-E-L motif on target proteins. The Lumenal portion of the chain corresponds to 53-58 (SNFISI). A helical transmembrane segment spans residues 59 to 79 (YNTVMKVVFLLCAYVTVYMIY). Residues 80 to 92 (WKFRKTFDIENDT) lie on the Cytoplasmic side of the membrane. The helical transmembrane segment at 93–110 (FRLEFLLVPVTGLSFLVN) threads the bilayer. Residues 111–116 (YSYTPM) are Lumenal-facing. The helical transmembrane segment at 117–135 (EVLWTFSIYLESVAILPQL) threads the bilayer. Topologically, residues 136 to 149 (FMISKTGEAETITT) are cytoplasmic. Residues 150–168 (HYLFFLGLYRLLYLANWIR) form a helical membrane-spanning segment. The interaction with the K-D-E-L motif on target proteins stretch occupies residues 159–169 (RLLYLANWIRR). The Lumenal portion of the chain corresponds to 169 to 178 (RYQTENFYDQ). The chain crosses the membrane as a helical span at residues 179–199 (ISVVSGVVQTIFYCDFFYLYV). Over 200–214 (TKVLKGKKLSLPVPV) the chain is Cytoplasmic. Positions 204–207 (KGKK) are important for recycling of cargo proteins with the sequence motif K-D-E-L from the Golgi to the endoplasmic reticulum.

This sequence belongs to the ERD2 family.

The protein localises to the endoplasmic reticulum membrane. It localises to the golgi apparatus membrane. It is found in the cytoplasmic vesicle. Its subcellular location is the COPI-coated vesicle membrane. Functionally, receptor for the C-terminal sequence motif K-D-E-L that is present on endoplasmic reticulum resident proteins and that mediates their recycling from the Golgi back to the endoplasmic reticulum. In Mus musculus (Mouse), this protein is ER lumen protein-retaining receptor 3 (Kdelr3).